The chain runs to 265 residues: MSLVCYESSSSGEDDDETISDNPRMLKVPKLQESFHELYKKKPKTFDSPEFHEGRIRGQKHIEGLWFVQTYLEVDLSKKVKKGIREFLNSQSRFQSLLCSEHNVPRRLHLSISENYRINYSTKNQLVHKWEQYTNNLNYRTLKFRLGKMCLLFNDEKTRMFLAFECKFSDENYKDLISHASDCMKEFTNRNLREDFLLHISFASSLTNEDEYQNWVSQDRESHFFKTMNEIINTKIQKDQFSESFIVDSLKLSIGHLIFTFPFCK.

Residues Met-1–Asn-22 are disordered. His-109 acts as the Proton acceptor in catalysis. AMP is bound by residues His-109–Ser-111 and Asp-195–Ser-201. Leu-197 to Ser-201 is a binding site for UMP. The active-site Proton donor is His-199.

Belongs to the 2H phosphoesterase superfamily. USB1 family.

The protein resides in the nucleus. It carries out the reaction a 3'-end uridylyl-uridine-RNA = a 3'-end 2',3'-cyclophospho-uridine-RNA + uridine. In terms of biological role, 3'-5' RNA exonuclease that trims the 3' end of oligo(U) tracts of the pre-U6 small nuclear RNA (snRNA) molecule, leading to the formation of a U6 snRNA 3' end-terminated with a 2',3'-cyclic phosphate.d. Participates in the U6 snRNA 3' end processing that prevents U6 snRNA degradation. This chain is U6 snRNA phosphodiesterase 1, found in Schizosaccharomyces pombe (strain 972 / ATCC 24843) (Fission yeast).